The primary structure comprises 206 residues: Large ribosomal subunit protein uL4 (206 aa).

A compositionally biased stretch (polar residues) spans 42–54; sequence RRQQGTHQSQGRS. The tract at residues 42–94 is disordered; that stretch reads RRQQGTHQSQGRSDVSRTGAKMFKQKGTGRARHSSARAPQFRGGGKAHGPVFR. Residues 64–76 show a composition bias toward basic residues; it reads FKQKGTGRARHSS.

This sequence belongs to the universal ribosomal protein uL4 family. As to quaternary structure, part of the 50S ribosomal subunit.

Its function is as follows. One of the primary rRNA binding proteins, this protein initially binds near the 5'-end of the 23S rRNA. It is important during the early stages of 50S assembly. It makes multiple contacts with different domains of the 23S rRNA in the assembled 50S subunit and ribosome. Forms part of the polypeptide exit tunnel. In Bartonella tribocorum (strain CIP 105476 / IBS 506), this protein is Large ribosomal subunit protein uL4.